A 1061-amino-acid chain; its full sequence is Lysine-specific demethylase jmjd-3.1 (1061 aa).

2 disordered regions span residues 30-49 and 256-417; these read VKNS…MRPV and KSLS…KRRT. Residues 271–287 are compositionally biased toward polar residues; the sequence is QHTNSVGSSIGTTSGDS. Positions 310 to 320 are enriched in low complexity; that stretch reads STSSEFTETTS. Residues 321–330 are compositionally biased toward polar residues; it reads VANQTESNAG. The interval 369–417 is required for nuclear localization; it reads KKKEQSATEPPIPRTKRAYTKNPNTIRKRRMKKNQSDDEEDDGPPKRRT. A required for binding of unc-3 and for function in Y-to-PDA transdifferentiation region spans residues 418 to 759; that stretch reads INYQIEFRDA…FGTNIDLLSE (342 aa). The JmjC domain occupies 760 to 923; sequence NFKKQMNEIE…LATSIVAHDH (164 aa). Fe cation contacts are provided by His811, Glu813, and His891. Positions 998, 1001, 1025, and 1028 each coordinate Zn(2+).

It belongs to the UTX family. In terms of assembly, interacts with wdr-5.1 and unc-3. The cofactor is Fe(2+). In terms of tissue distribution, mainly expressed in head and tail.

The protein localises to the nucleus. Its function is as follows. Histone demethylase that specifically demethylates trimethylated 'Lys-27' of histone H3, a mark associated with transcriptional repression, thereby playing a central role in the histone code. Involved in the transcriptional regulation of the heat shock response, unfolded protein response and possibly other stress response target genes. Required for gonad development and organization. Required for the robust transdifferentiation of the Y rectal epithelial cell to the PDA motor neuron during larval development. Acts cell-autonomously in Y-to-PDA transdifferentiation, which depends on the demethylase activity and on recognition of the H3 tail. Cooperates with set-2 and unc-3 to ensure robust Y-to-PDA transdifferentiation. Promotes mitochondrial stress-induced longevity. Involved in lifespan regulation. This chain is Lysine-specific demethylase jmjd-3.1, found in Caenorhabditis elegans.